A 170-amino-acid polypeptide reads, in one-letter code: Adenine phosphoribosyltransferase (170 aa).

The protein belongs to the purine/pyrimidine phosphoribosyltransferase family. As to quaternary structure, homodimer.

Its subcellular location is the cytoplasm. The enzyme catalyses AMP + diphosphate = 5-phospho-alpha-D-ribose 1-diphosphate + adenine. It participates in purine metabolism; AMP biosynthesis via salvage pathway; AMP from adenine: step 1/1. Catalyzes a salvage reaction resulting in the formation of AMP, that is energically less costly than de novo synthesis. This chain is Adenine phosphoribosyltransferase, found in Lysinibacillus sphaericus (strain C3-41).